Consider the following 697-residue polypeptide: Potassium-transporting ATPase ATP-binding subunit (697 aa).

4 consecutive transmembrane segments (helical) span residues 36–56 (VMFV…RDLI), 66–86 (LQII…EAVA), 218–238 (IALN…TATI), and 253–273 (VLVA…LSAI). The active-site 4-aspartylphosphate intermediate is Asp-306. ATP contacts are provided by residues Asp-343, Glu-347, 376 to 383 (FTAQTRMS), and Lys-394. Mg(2+) is bound by residues Asp-526 and Asp-530. Helical transmembrane passes span 595–615 (YFAI…QSTG), 631–651 (AILS…PLSL), and 669–689 (LLVY…IIDM).

The protein belongs to the cation transport ATPase (P-type) (TC 3.A.3) family. Type IA subfamily. The system is composed of three essential subunits: KdpA, KdpB and KdpC.

The protein resides in the cell inner membrane. It catalyses the reaction K(+)(out) + ATP + H2O = K(+)(in) + ADP + phosphate + H(+). Its function is as follows. Part of the high-affinity ATP-driven potassium transport (or Kdp) system, which catalyzes the hydrolysis of ATP coupled with the electrogenic transport of potassium into the cytoplasm. This subunit is responsible for energy coupling to the transport system and for the release of the potassium ions to the cytoplasm. The protein is Potassium-transporting ATPase ATP-binding subunit of Mesorhizobium japonicum (strain LMG 29417 / CECT 9101 / MAFF 303099) (Mesorhizobium loti (strain MAFF 303099)).